A 3075-amino-acid polypeptide reads, in one-letter code: Laminin subunit alpha-1 (3075 aa).

The first 17 residues, 1–17 (MRGGVLLVLLLCVAAQC), serve as a signal peptide directing secretion. A Laminin N-terminal domain is found at 18-269 (RQRGLFPAIL…SIKDISVGGM (252 aa)). 16 cysteine pairs are disulfide-bonded: cysteine 270–cysteine 279, cysteine 272–cysteine 290, cysteine 292–cysteine 301, cysteine 304–cysteine 324, cysteine 327–cysteine 336, cysteine 329–cysteine 361, cysteine 364–cysteine 373, cysteine 376–cysteine 394, cysteine 397–cysteine 409, cysteine 399–cysteine 427, cysteine 429–cysteine 438, cysteine 441–cysteine 451, cysteine 454–cysteine 467, cysteine 456–cysteine 471, cysteine 473–cysteine 482, and cysteine 485–cysteine 500. Laminin EGF-like domains are found at residues 270 to 326 (CICY…TCEA), 327 to 396 (CNCH…PCRP), 397 to 453 (CNCD…TCVS), and 454 to 502 (CGCN…GCSE). In terms of domain architecture, Laminin EGF-like 5; first part spans 503-512 (CFCFGVSDVC). Positions 516–708 (SWPVGQVNSM…DLVVAADVEH (193 aa)) constitute a Laminin IV type A 1 domain. Residue asparagine 665 is glycosylated (N-linked (GlcNAc...) asparagine). Residues 709-741 (CECPQGYTGTSCESCLSGYYRVDGILFGGICQP) form the Laminin EGF-like 5; second part domain. 32 cysteine pairs are disulfide-bonded: cysteine 742-cysteine 751, cysteine 744-cysteine 757, cysteine 760-cysteine 769, cysteine 772-cysteine 788, cysteine 791-cysteine 806, cysteine 793-cysteine 816, cysteine 819-cysteine 828, cysteine 831-cysteine 846, cysteine 849-cysteine 863, cysteine 851-cysteine 870, cysteine 873-cysteine 882, cysteine 885-cysteine 899, cysteine 902-cysteine 914, cysteine 904-cysteine 921, cysteine 923-cysteine 932, cysteine 935-cysteine 948, cysteine 951-cysteine 963, cysteine 953-cysteine 969, cysteine 971-cysteine 980, cysteine 983-cysteine 995, cysteine 998-cysteine 1007, cysteine 1000-cysteine 1014, cysteine 1016-cysteine 1025, cysteine 1028-cysteine 1041, cysteine 1044-cysteine 1056, cysteine 1046-cysteine 1063, cysteine 1065-cysteine 1074, cysteine 1077-cysteine 1087, cysteine 1090-cysteine 1102, cysteine 1092-cysteine 1118, cysteine 1120-cysteine 1129, and cysteine 1132-cysteine 1147. 8 consecutive Laminin EGF-like domains span residues 742 to 790 (CECH…DCQP), 791 to 848 (CACP…SCVP), 849 to 901 (CDCS…NCRA), 902 to 950 (CECH…GCRP), 951 to 997 (CNCS…SCTP), 998 to 1043 (CDCP…GCQA), 1044 to 1089 (CNCS…DCVP), and 1090 to 1149 (CDCD…GCSP). The region spanning 1150-1159 (CFCSGLSHLC) is the Laminin EGF-like 14; first part domain. The Laminin IV type A 2 domain occupies 1170–1361 (VTLGSDQPLL…EEEVASLLEN (192 aa)). In terms of domain architecture, Laminin EGF-like 14; second part spans 1362-1402 (CVCPPGTVGFSCQDCAPGYHRGKLPAGSDRGPRPLVAPCVP). Intrachain disulfides connect cysteine 1403–cysteine 1412, cysteine 1405–cysteine 1419, cysteine 1422–cysteine 1431, cysteine 1434–cysteine 1449, cysteine 1452–cysteine 1466, cysteine 1454–cysteine 1476, cysteine 1479–cysteine 1488, cysteine 1491–cysteine 1506, cysteine 1509–cysteine 1521, cysteine 1511–cysteine 1528, cysteine 1530–cysteine 1539, and cysteine 1542–cysteine 1553. 3 Laminin EGF-like domains span residues 1403–1451 (CSCN…DCAL), 1452–1508 (CACP…SCQK), and 1509–1555 (CDCN…DCVS). The segment at 1556-2116 (CDDECVGVLL…SQARKQAASI (561 aa)) is domain II and I. Residues asparagine 1579, asparagine 1689, asparagine 1717, asparagine 2047, and asparagine 2243 are each glycosylated (N-linked (GlcNAc...) asparagine). Residues 1706 to 1783 (MQIRDFTQLH…KMQESNHLLL (78 aa)) are a coiled coil. Laminin G-like domains lie at 2117–2297 (KVAV…CRGC), 2305–2481 (DPSF…RKGC), 2486–2673 (IRSV…LDTC), 2713–2885 (AHQF…VNRC), and 2890–3070 (QEGT…LHSC). Cystine bridges form between cysteine 2271–cysteine 2297 and cysteine 2457–cysteine 2481. A Cell attachment site motif is present at residues 2534–2536 (RGD). 3 disulfide bridges follow: cysteine 2646–cysteine 2673, cysteine 2860–cysteine 2885, and cysteine 3039–cysteine 3070.

In terms of assembly, laminin is a complex glycoprotein, consisting of three different polypeptide chains (alpha, beta, gamma), which are bound to each other by disulfide bonds into a cross-shaped molecule comprising one long and three short arms with globules at each end. Alpha-1 is a subunit of laminin-1 (laminin-111 or EHS laminin) and laminin-3 (laminin-121 or S-laminin). Post-translationally, tyrosine phosphorylated by PKDCC/VLK.

It localises to the secreted. Its subcellular location is the extracellular space. It is found in the extracellular matrix. The protein resides in the basement membrane. Functionally, binding to cells via a high affinity receptor, laminin is thought to mediate the attachment, migration and organization of cells into tissues during embryonic development by interacting with other extracellular matrix components. This is Laminin subunit alpha-1 (LAMA1) from Homo sapiens (Human).